Here is a 566-residue protein sequence, read N- to C-terminus: Sulfite reductase [NADPH] hemoprotein beta-component (566 aa).

Residues cysteine 430, cysteine 436, cysteine 475, and cysteine 479 each coordinate [4Fe-4S] cluster. Position 479 (cysteine 479) interacts with siroheme.

It belongs to the nitrite and sulfite reductase 4Fe-4S domain family. In terms of assembly, alpha(8)-beta(8). The alpha component is a flavoprotein, the beta component is a hemoprotein. The cofactor is siroheme. Requires [4Fe-4S] cluster as cofactor.

It carries out the reaction hydrogen sulfide + 3 NADP(+) + 3 H2O = sulfite + 3 NADPH + 4 H(+). It participates in sulfur metabolism; hydrogen sulfide biosynthesis; hydrogen sulfide from sulfite (NADPH route): step 1/1. In terms of biological role, component of the sulfite reductase complex that catalyzes the 6-electron reduction of sulfite to sulfide. This is one of several activities required for the biosynthesis of L-cysteine from sulfate. The chain is Sulfite reductase [NADPH] hemoprotein beta-component from Baumannia cicadellinicola subsp. Homalodisca coagulata.